The primary structure comprises 299 residues: Protease HtpX homolog (299 aa).

2 helical membrane passes run 19-39 and 41-61; these read LFIVTFSLILFAIGYFFVWYF and WGLTGIVLLAIFIVLYNWIAY. H146 is a Zn(2+) binding site. E147 is a catalytic residue. Residue H150 participates in Zn(2+) binding. 2 helical membrane-spanning segments follow: residues 156–176 and 198–218; these read ILLMTVVAVVAGLIILLRDVM and IILLIIGLIFSIIAPLIVLII. E227 lines the Zn(2+) pocket.

Belongs to the peptidase M48B family. Requires Zn(2+) as cofactor.

The protein resides in the cell membrane. The chain is Protease HtpX homolog from Thermoanaerobacter pseudethanolicus (strain ATCC 33223 / 39E) (Clostridium thermohydrosulfuricum).